The chain runs to 448 residues: Receptor homology region, transmembrane domain- and RING domain-containing protein 2 (448 aa).

A signal peptide spans 1–20 (MNRALVLLLYVCTVSCLASS). Topologically, residues 21-163 (KVILMRNNIT…IPSFENSAWS (143 aa)) are lumenal. Asparagine 28 and asparagine 74 each carry an N-linked (GlcNAc...) asparagine glycan. Residues 60–144 (DACQNLMNKP…ETGEVLKEYA (85 aa)) form the PA domain. Cysteine 62 and cysteine 87 are joined by a disulfide. Residues 164-184 (IMAVSFISLLAMSAVLATCFF) traverse the membrane as a helical segment. Topologically, residues 185–448 (VRRHRIRRRT…YASANSLPDC (264 aa)) are cytoplasmic. The segment at 232 to 274 (CAICLEDYTVGDKLRLLPCCHKFHAACVDSWLTSWRTFCPVCK) adopts an RING-type; atypical zinc-finger fold. Residues 344 to 378 (QSSSNRRSPPISVSRSSVDLRQQAASPSPSPSQRS) are compositionally biased toward low complexity. Disordered regions lie at residues 344–380 (QSSSNRRSPPISVSRSSVDLRQQAASPSPSPSQRSYI) and 402–424 (MSPYRPSPSNASPAMAGSSNYPL). Positions 408–423 (SPSNASPAMAGSSNYP) are enriched in polar residues.

The protein resides in the protein storage vacuole membrane. Its subcellular location is the golgi apparatus membrane. In terms of biological role, involved in the trafficking of vacuolar proteins. May function as a sorting receptor for protein trafficking to the protein storage vacuole (PSV). In Arabidopsis thaliana (Mouse-ear cress), this protein is Receptor homology region, transmembrane domain- and RING domain-containing protein 2 (RMR2).